A 262-amino-acid chain; its full sequence is Adenosylcobinamide-GDP ribazoletransferase (262 aa).

4 helical membrane passes run 43-63 (PLAG…LGAI), 121-141 (VALI…LPLL), 145-165 (GGGV…VWHW), and 195-215 (GVIL…AVLL).

This sequence belongs to the CobS family. Requires Mg(2+) as cofactor.

The protein localises to the cell inner membrane. The catalysed reaction is alpha-ribazole + adenosylcob(III)inamide-GDP = adenosylcob(III)alamin + GMP + H(+). The enzyme catalyses alpha-ribazole 5'-phosphate + adenosylcob(III)inamide-GDP = adenosylcob(III)alamin 5'-phosphate + GMP + H(+). It functions in the pathway cofactor biosynthesis; adenosylcobalamin biosynthesis; adenosylcobalamin from cob(II)yrinate a,c-diamide: step 7/7. In terms of biological role, joins adenosylcobinamide-GDP and alpha-ribazole to generate adenosylcobalamin (Ado-cobalamin). Also synthesizes adenosylcobalamin 5'-phosphate from adenosylcobinamide-GDP and alpha-ribazole 5'-phosphate. The sequence is that of Adenosylcobinamide-GDP ribazoletransferase from Sinorhizobium medicae (strain WSM419) (Ensifer medicae).